Here is a 315-residue protein sequence, read N- to C-terminus: Methionyl-tRNA formyltransferase (315 aa).

Serine 112–proline 115 is a binding site for (6S)-5,6,7,8-tetrahydrofolate.

This sequence belongs to the Fmt family.

The enzyme catalyses L-methionyl-tRNA(fMet) + (6R)-10-formyltetrahydrofolate = N-formyl-L-methionyl-tRNA(fMet) + (6S)-5,6,7,8-tetrahydrofolate + H(+). Functionally, attaches a formyl group to the free amino group of methionyl-tRNA(fMet). The formyl group appears to play a dual role in the initiator identity of N-formylmethionyl-tRNA by promoting its recognition by IF2 and preventing the misappropriation of this tRNA by the elongation apparatus. This chain is Methionyl-tRNA formyltransferase, found in Rhizobium rhizogenes (strain K84 / ATCC BAA-868) (Agrobacterium radiobacter).